The following is a 260-amino-acid chain: Tropinone reductase 2 (260 aa).

An NADP(+)-binding site is contributed by 13–37 (LVTGGSRGIGYGIVEELANLGASVY). Substrate is bound at residue serine 146. Tyrosine 159 functions as the Proton acceptor in the catalytic mechanism.

This sequence belongs to the short-chain dehydrogenases/reductases (SDR) family.

The catalysed reaction is pseudotropine + NADP(+) = tropinone + NADPH + H(+). It participates in alkaloid biosynthesis; tropane alkaloid biosynthesis. Its function is as follows. Catalyzes the stereospecific reduction of tropinone to pseudotropine. This Hyoscyamus niger (Black henbane) protein is Tropinone reductase 2 (TR2).